Reading from the N-terminus, the 481-residue chain is NADH-quinone oxidoreductase subunit N (481 aa).

The next 14 membrane-spanning stretches (helical) occupy residues 11–31 (ALPE…DLWA), 38–58 (WTHY…LAVW), 74–94 (GMSR…FVYA), 103–123 (IFKG…SVMV), 128–148 (FLTA…LIAL), 163–183 (FVLG…VYGA), 208–228 (LGLV…PFHM), 241–261 (VTAL…FRIL), 272–292 (WSLM…LAAI), 300–322 (MLAY…GAVG), 332–352 (TYAL…DGDN), 368–388 (VWLA…PPLM), 404–424 (GYVW…FYYL), and 450–470 (SLLS…QTVI).

The protein belongs to the complex I subunit 2 family. As to quaternary structure, NDH-1 is composed of 14 different subunits. Subunits NuoA, H, J, K, L, M, N constitute the membrane sector of the complex.

The protein resides in the cell inner membrane. It catalyses the reaction a quinone + NADH + 5 H(+)(in) = a quinol + NAD(+) + 4 H(+)(out). NDH-1 shuttles electrons from NADH, via FMN and iron-sulfur (Fe-S) centers, to quinones in the respiratory chain. The immediate electron acceptor for the enzyme in this species is believed to be ubiquinone. Couples the redox reaction to proton translocation (for every two electrons transferred, four hydrogen ions are translocated across the cytoplasmic membrane), and thus conserves the redox energy in a proton gradient. The sequence is that of NADH-quinone oxidoreductase subunit N from Neisseria gonorrhoeae (strain ATCC 700825 / FA 1090).